The primary structure comprises 350 residues: Erythronate-4-phosphate dehydrogenase (350 aa).

2 residues coordinate substrate: serine 45 and threonine 66. NAD(+)-binding positions include 124–125, aspartate 144, 203–205, and aspartate 226; these read QV and ASR. Arginine 205 is an active-site residue. Residue glutamate 231 is part of the active site. Histidine 248 acts as the Proton donor in catalysis. Glycine 251 provides a ligand contact to NAD(+).

The protein belongs to the D-isomer specific 2-hydroxyacid dehydrogenase family. PdxB subfamily. As to quaternary structure, homodimer.

It is found in the cytoplasm. It catalyses the reaction 4-phospho-D-erythronate + NAD(+) = (R)-3-hydroxy-2-oxo-4-phosphooxybutanoate + NADH + H(+). It functions in the pathway cofactor biosynthesis; pyridoxine 5'-phosphate biosynthesis; pyridoxine 5'-phosphate from D-erythrose 4-phosphate: step 2/5. In terms of biological role, catalyzes the oxidation of erythronate-4-phosphate to 3-hydroxy-2-oxo-4-phosphonooxybutanoate. The polypeptide is Erythronate-4-phosphate dehydrogenase (Legionella pneumophila subsp. pneumophila (strain Philadelphia 1 / ATCC 33152 / DSM 7513)).